The chain runs to 107 residues: L-rhamnose mutarotase (107 aa).

A substrate-binding site is contributed by Y21. The active-site Proton donor is the H25. Residues Y44 and 79 to 80 (WW) each bind substrate. Positions 88-107 (ETNPDNSPKTNSLKEVFHLD) are disordered. Residues 90–100 (NPDNSPKTNSL) show a composition bias toward polar residues.

It belongs to the rhamnose mutarotase family. In terms of assembly, homodimer.

It localises to the cytoplasm. The enzyme catalyses alpha-L-rhamnose = beta-L-rhamnose. It participates in carbohydrate metabolism; L-rhamnose metabolism. Its function is as follows. Involved in the anomeric conversion of L-rhamnose. In Flavobacterium johnsoniae (strain ATCC 17061 / DSM 2064 / JCM 8514 / BCRC 14874 / CCUG 350202 / NBRC 14942 / NCIMB 11054 / UW101) (Cytophaga johnsonae), this protein is L-rhamnose mutarotase.